Reading from the N-terminus, the 356-residue chain is D-alanine--D-alanine ligase (356 aa).

An ATP-grasp domain is found at 134–339 (KQLFEHRGLP…YPELITKLIE (206 aa)). ATP is bound at residue 167–222 (NDKLNYPVFVKPANLGSSIGISKCSNEVELKEGIKEAFQFDRKLVIEQGVNAREIE). Residues D293, E306, and N308 each coordinate Mg(2+).

It belongs to the D-alanine--D-alanine ligase family. Mg(2+) is required as a cofactor. Mn(2+) serves as cofactor.

The protein localises to the cytoplasm. The enzyme catalyses 2 D-alanine + ATP = D-alanyl-D-alanine + ADP + phosphate + H(+). The protein operates within cell wall biogenesis; peptidoglycan biosynthesis. Functionally, cell wall formation. This is D-alanine--D-alanine ligase from Staphylococcus aureus (strain MRSA252).